A 150-amino-acid polypeptide reads, in one-letter code: Ribosome-binding factor A (150 aa).

The segment at 126–150 (EVARDLSHDDDEDGGADEAPRNGDE) is disordered.

It belongs to the RbfA family. As to quaternary structure, monomer. Binds 30S ribosomal subunits, but not 50S ribosomal subunits or 70S ribosomes.

It is found in the cytoplasm. Functionally, one of several proteins that assist in the late maturation steps of the functional core of the 30S ribosomal subunit. Associates with free 30S ribosomal subunits (but not with 30S subunits that are part of 70S ribosomes or polysomes). Required for efficient processing of 16S rRNA. May interact with the 5'-terminal helix region of 16S rRNA. This chain is Ribosome-binding factor A, found in Brucella abortus (strain S19).